The following is a 186-amino-acid chain: Ribosome-recycling factor (186 aa).

Belongs to the RRF family.

Its subcellular location is the cytoplasm. In terms of biological role, responsible for the release of ribosomes from messenger RNA at the termination of protein biosynthesis. May increase the efficiency of translation by recycling ribosomes from one round of translation to another. The protein is Ribosome-recycling factor of Chlorobium chlorochromatii (strain CaD3).